The sequence spans 109 residues: MINYLWFVLAAFCEIAGCYAFYLWLRLGKSALWVLPGLLSLTLFALLLTRVEASYAGRAYAAYGGIYVAASLFWLAFVERSRPLWSDWLGVALCVVGASVVLFGPRLSQ.

The next 4 helical transmembrane spans lie at 5–25 (LWFV…YLWL), 27–47 (LGKS…FALL), 59–79 (AYAA…AFVE), and 84–104 (LWSD…VLFG).

This sequence belongs to the UPF0060 family.

The protein resides in the cell inner membrane. This is UPF0060 membrane protein PA14_21660 from Pseudomonas aeruginosa (strain UCBPP-PA14).